The sequence spans 322 residues: Mycothiol acetyltransferase (322 aa).

N-acetyltransferase domains are found at residues 5-150 (SWLR…DPDD) and 160-322 (VTIR…PARG). Position 36 (Glu-36) interacts with 1D-myo-inositol 2-(L-cysteinylamino)-2-deoxy-alpha-D-glucopyranoside. Acetyl-CoA contacts are provided by residues 79–81 (LVV) and 87–92 (RRGVGT). Residues Glu-187, Lys-226, and Glu-252 each coordinate 1D-myo-inositol 2-(L-cysteinylamino)-2-deoxy-alpha-D-glucopyranoside. 256 to 258 (VGV) provides a ligand contact to acetyl-CoA. A 1D-myo-inositol 2-(L-cysteinylamino)-2-deoxy-alpha-D-glucopyranoside-binding site is contributed by Tyr-290. Residue 295–300 (NARAVR) coordinates acetyl-CoA.

Belongs to the acetyltransferase family. MshD subfamily. As to quaternary structure, monomer.

The catalysed reaction is 1D-myo-inositol 2-(L-cysteinylamino)-2-deoxy-alpha-D-glucopyranoside + acetyl-CoA = mycothiol + CoA + H(+). Catalyzes the transfer of acetyl from acetyl-CoA to desacetylmycothiol (Cys-GlcN-Ins) to form mycothiol. The sequence is that of Mycothiol acetyltransferase from Parafrankia sp. (strain EAN1pec).